Consider the following 132-residue polypeptide: Small ribosomal subunit protein uS8 (132 aa).

This sequence belongs to the universal ribosomal protein uS8 family. In terms of assembly, part of the 30S ribosomal subunit. Contacts proteins S5 and S12.

One of the primary rRNA binding proteins, it binds directly to 16S rRNA central domain where it helps coordinate assembly of the platform of the 30S subunit. This is Small ribosomal subunit protein uS8 from Bartonella bacilliformis (strain ATCC 35685 / KC583 / Herrer 020/F12,63).